A 92-amino-acid polypeptide reads, in one-letter code: Putative phosphotransferase enzyme IIB component BB_0367 (92 aa).

A PTS EIIB type-1 domain is found at isoleucine 10–glutamine 92.

Its subcellular location is the cytoplasm. Functionally, the phosphoenolpyruvate-dependent sugar phosphotransferase system (PTS), a major carbohydrate active -transport system, catalyzes the phosphorylation of incoming sugar substrates concomitant with their translocation across the cell membrane. The chain is Putative phosphotransferase enzyme IIB component BB_0367 from Borreliella burgdorferi (strain ATCC 35210 / DSM 4680 / CIP 102532 / B31) (Borrelia burgdorferi).